A 185-amino-acid chain; its full sequence is Peptidyl-tRNA hydrolase (185 aa).

Tyrosine 14 serves as a coordination point for tRNA. The active-site Proton acceptor is histidine 19. TRNA is bound by residues tyrosine 65, asparagine 67, and asparagine 113.

It belongs to the PTH family. As to quaternary structure, monomer.

The protein localises to the cytoplasm. It catalyses the reaction an N-acyl-L-alpha-aminoacyl-tRNA + H2O = an N-acyl-L-amino acid + a tRNA + H(+). Functionally, hydrolyzes ribosome-free peptidyl-tRNAs (with 1 or more amino acids incorporated), which drop off the ribosome during protein synthesis, or as a result of ribosome stalling. Catalyzes the release of premature peptidyl moieties from peptidyl-tRNA molecules trapped in stalled 50S ribosomal subunits, and thus maintains levels of free tRNAs and 50S ribosomes. The polypeptide is Peptidyl-tRNA hydrolase (Rickettsia bellii (strain RML369-C)).